The sequence spans 195 residues: Flagellar transcriptional regulator FlhC (195 aa).

Zn(2+) contacts are provided by Cys-137, Cys-140, Cys-157, and Cys-160. The interval 165 to 195 (RAGSARRKTTTRKAVAPTHKTTAASRKAVVA) is disordered.

Belongs to the FlhC family. In terms of assembly, heterohexamer composed of two FlhC and four FlhD subunits. Each FlhC binds a FlhD dimer, forming a heterotrimer, and a hexamer assembles by dimerization of two heterotrimers. Requires Zn(2+) as cofactor.

It is found in the cytoplasm. Functions in complex with FlhD as a master transcriptional regulator that regulates transcription of several flagellar and non-flagellar operons by binding to their promoter region. Activates expression of class 2 flagellar genes, including fliA, which is a flagellum-specific sigma factor that turns on the class 3 genes. Also regulates genes whose products function in a variety of physiological pathways. This Thauera aminoaromatica protein is Flagellar transcriptional regulator FlhC.